The chain runs to 281 residues: Putative phosphoenolpyruvate synthase regulatory protein (281 aa).

161–168 (GVSRSGKT) is an ADP binding site.

It belongs to the pyruvate, phosphate/water dikinase regulatory protein family. PSRP subfamily.

It carries out the reaction [pyruvate, water dikinase] + ADP = [pyruvate, water dikinase]-phosphate + AMP + H(+). The enzyme catalyses [pyruvate, water dikinase]-phosphate + phosphate + H(+) = [pyruvate, water dikinase] + diphosphate. Functionally, bifunctional serine/threonine kinase and phosphorylase involved in the regulation of the phosphoenolpyruvate synthase (PEPS) by catalyzing its phosphorylation/dephosphorylation. The chain is Putative phosphoenolpyruvate synthase regulatory protein from Herminiimonas arsenicoxydans.